The chain runs to 487 residues: Iron-sulfur cluster assembly SufBD family protein ycf24 (487 aa).

It belongs to the iron-sulfur cluster assembly SufBD family.

It is found in the plastid. The protein localises to the chloroplast. The chain is Iron-sulfur cluster assembly SufBD family protein ycf24 (ycf24) from Porphyra purpurea (Red seaweed).